The following is a 266-amino-acid chain: MGYFKRVVLYIIVMVVSVFIIGCNKSSDTSEKPKEDSKETQIKKSFAKTLDMYPIKNLEDLYDKEGYRDGEFKKGDKGMWTIYTDFAKSNKQGGLSNEGMVLYLDRNTRTAKGHYFVKTFYNKGKFPDRKNYKVEMKNNKIILLDKVEDINLKKRIENFKFFGQYANLKELKNYSNGDVSINENVPSYDAKFKMSNKDENVKQLRSRYNIPTDKAPVLKMHIDGDLKGSSVGYKKLEIDFSKGEKSDLSVIDSLNFQPAKVDEDDE.

A signal peptide spans 1 to 22; the sequence is MGYFKRVVLYIIVMVVSVFIIG. A lipid anchor (N-palmitoyl cysteine) is attached at cysteine 23. The S-diacylglycerol cysteine moiety is linked to residue cysteine 23.

Belongs to the staphylococcal tandem lipoprotein family.

The protein resides in the cell membrane. This is an uncharacterized protein from Staphylococcus aureus (strain N315).